A 618-amino-acid polypeptide reads, in one-letter code: Phostensin (618 aa).

The segment covering R15–L33 has biased composition (basic and acidic residues). The interval R15–G505 is disordered. S54 carries the post-translational modification Phosphoserine. The segment covering Q96–Q109 has biased composition (low complexity). Composition is skewed to basic and acidic residues over residues R110 to L160 and L173 to K197. S131, S139, S181, and S201 each carry phosphoserine. The residue at position 205 (T205) is a Phosphothreonine. S231 is modified (phosphoserine). Composition is skewed to basic and acidic residues over residues D234–A245 and S271–T289. Low complexity predominate over residues E308 to A319. Residues K348–E358 are compositionally biased toward basic and acidic residues. A compositionally biased stretch (pro residues) spans R429–D451. A Phosphoserine modification is found at S437. An N6-acetyllysine modification is found at K462. Residues A485 to G505 show a composition bias toward low complexity. A Phosphoserine modification is found at S535. Residues Y556 to L594 form a disordered region. Residues P572–A583 are compositionally biased toward pro residues. The segment covering P585–L594 has biased composition (acidic residues).

As to quaternary structure, interacts with Protein phosphatase 1 (PP1).

It is found in the cytoplasm. The protein resides in the cytoskeleton. In terms of biological role, may target protein phosphatase 1 to F-actin cytoskeleton. This Sus scrofa (Pig) protein is Phostensin (PPP1R18).